Consider the following 327-residue polypeptide: cAMP-dependent protein kinase regulatory subunit (327 aa).

A disordered region spans residues 1–47 (MTNNISHNQKATEKVEAQNNNNITRKRRGAISSEPLGDKPATPLPNI). The tract at residues 1 to 65 (MTNNISHNQK…RLEQALSNNI (65 aa)) is dimerization and phosphorylation. A Pseudophosphorylation motif motif is present at residues 27–31 (RRGAI). A Phosphoserine modification is found at Ser32. 3',5'-cyclic AMP-binding positions include 66 to 188 (MFSH…EKVS), Glu136, Arg145, 189 to 327 (ILRH…SQKS), Glu262, and Arg271.

It belongs to the cAMP-dependent kinase regulatory chain family. In Dictyostelium the holoenzyme is a dimer composed of a regulatory (R) and a catalytic (C) subunit. In the presence of cAMP it dissociates into the active C subunit and an R monomer. In other eukaryotes the holoenzyme is a tetramer composed of 2 regulatory (R) and 2 catalytic (C) subunits. In the presence of cAMP it dissociates into active monomeric C subunits and an R dimer. Post-translationally, the pseudophosphorylation site binds to the substrate-binding region of the catalytic chain but is not phosphorylated. The physiological significance of phosphorylations by other kinases is unclear.

The sequence is that of cAMP-dependent protein kinase regulatory subunit (pkaR) from Dictyostelium discoideum (Social amoeba).